Consider the following 427-residue polypeptide: Adenylosuccinate synthetase (427 aa).

Residues glycine 12 to lysine 18 and glycine 40 to threonine 42 contribute to the GTP site. Aspartate 13 functions as the Proton acceptor in the catalytic mechanism. Mg(2+) contacts are provided by aspartate 13 and glycine 40. Residues aspartate 13–lysine 16, asparagine 38–histidine 41, threonine 128, arginine 142, glutamine 223, threonine 238, and arginine 302 contribute to the IMP site. Catalysis depends on histidine 41, which acts as the Proton donor. Threonine 298–arginine 304 lines the substrate pocket. GTP is bound by residues arginine 304, serine 330–aspartate 332, and serine 412–glycine 414.

It belongs to the adenylosuccinate synthetase family. Homodimer. Mg(2+) is required as a cofactor.

The protein resides in the cytoplasm. The catalysed reaction is IMP + L-aspartate + GTP = N(6)-(1,2-dicarboxyethyl)-AMP + GDP + phosphate + 2 H(+). Its pathway is purine metabolism; AMP biosynthesis via de novo pathway; AMP from IMP: step 1/2. Its function is as follows. Plays an important role in the de novo pathway of purine nucleotide biosynthesis. Catalyzes the first committed step in the biosynthesis of AMP from IMP. The chain is Adenylosuccinate synthetase from Staphylococcus aureus (strain MW2).